The sequence spans 422 residues: Histidine--tRNA ligase (422 aa).

It belongs to the class-II aminoacyl-tRNA synthetase family. As to quaternary structure, homodimer.

The protein localises to the cytoplasm. The catalysed reaction is tRNA(His) + L-histidine + ATP = L-histidyl-tRNA(His) + AMP + diphosphate + H(+). This is Histidine--tRNA ligase from Vibrio atlanticus (strain LGP32) (Vibrio splendidus (strain Mel32)).